An 80-amino-acid chain; its full sequence is Conotoxin Cl11.2 (80 aa).

A signal peptide spans 1–19 (MKMSVTFLLILMILPLFTG). Positions 20–41 (EWQSGSRLSALKKRLLEKRLLQ) are excised as a propeptide. Disulfide bonds link C45/C59, C52/C63, C58/C68, and C62/C74.

The protein belongs to the conotoxin I1 superfamily. In terms of tissue distribution, expressed by the venom duct.

It is found in the secreted. The sequence is that of Conotoxin Cl11.2 from Californiconus californicus (California cone).